A 783-amino-acid chain; its full sequence is Cell wall transcription factor ACE2 (783 aa).

5 disordered regions span residues 166–195, 219–311, 355–452, 474–497, and 535–624; these read AINT…ALPD, EEEK…GNSY, YQKQ…IHQN, AEQP…QPEL, and NQNQ…PRRR. Polar residues-rich tracts occupy residues 183 to 193, 227 to 254, 302 to 311, and 355 to 371; these read GSQTPTPTSAL, QRMM…PQTM, KSDSVGGNSY, and YQKQ…QNDS. The segment covering 372 to 395 has biased composition (low complexity); sequence QQLEPLKTPQPQPKQQQQQQQPNN. Polar residues predominate over residues 420–431; the sequence is INGSPDWNSSPE. 2 stretches are compositionally biased toward low complexity: residues 483–497 and 535–544; these read PHQQ…QPEL and NQNQNQNQNQ. Positions 545-575 are enriched in polar residues; it reads TKTPYSQQSQFSPTHSNFNLSPAKQLNSNVG. 2 consecutive C2H2-type zinc fingers follow at residues 649–673 and 679–701; these read YTCT…IQTH and FGCQ…VKGH.

The protein resides in the nucleus. Transcription factor involved in the RAM (regulation of ACE2 transcription factor and polarized morphogenesis) signaling network that regulates polarized morphogenesis. Regulates expression of genes involved in cell separation such as CHT3, DSE1, and SCW11; or other cell wall genes such as ASH1, DSE4, PIR1, PRY2, and RME1. Required for regulation of morphogenesis, cell separation, adherence, biofilm formation, invasion, as well as virulence in a mouse model of infection. In Candida albicans (strain SC5314 / ATCC MYA-2876) (Yeast), this protein is Cell wall transcription factor ACE2 (ACE2).